Reading from the N-terminus, the 81-residue chain is Beta-catenin-interacting protein 1 (81 aa).

Ser-59 carries the post-translational modification Phosphoserine.

The protein belongs to the CTNNBIP1 family. In terms of assembly, binds CTNNB1.

The protein resides in the cytoplasm. It localises to the nucleus. Its function is as follows. Prevents the interaction between CTNNB1 and TCF family members, and acts as a negative regulator of the Wnt signaling pathway. This Bos taurus (Bovine) protein is Beta-catenin-interacting protein 1 (CTNNBIP1).